We begin with the raw amino-acid sequence, 147 residues long: Hemoglobin subunit beta (147 aa).

Residues 3 to 147 (HWTPEEKQYI…VAHALALGYH (145 aa)) form the Globin domain. 2 residues coordinate heme b: His64 and His93.

This sequence belongs to the globin family. As to quaternary structure, heterotetramer of two alpha-D chains and two beta chains. As to expression, red blood cells.

In terms of biological role, involved in oxygen transport from the lung to the various peripheral tissues. In Chelonoidis niger (Galapagos giant tortoise), this protein is Hemoglobin subunit beta (HBB).